The following is a 216-amino-acid chain: Transmembrane emp24 domain-containing protein eca (216 aa).

Residues M1–G20 form the signal peptide. At L21 to S182 the chain is on the lumenal side. Residues R30–V126 form the GOLD domain. The stretch at A134 to N164 forms a coiled coil. The chain crosses the membrane as a helical span at residues R183–M203. At R204–V216 the chain is on the cytoplasmic side. Positions K213 to V216 match the Prevents secretion from ER motif.

This sequence belongs to the EMP24/GP25L family.

Its subcellular location is the endoplasmic reticulum membrane. Its function is as follows. Eca and bai are essential, though not redundant, for dorsoventral patterning of the embryo. Specifically required during early embryogenesis for the activity of maternal tkv, while the zygotic tkv is not affected. Involved in Golgi organization. The polypeptide is Transmembrane emp24 domain-containing protein eca (Drosophila melanogaster (Fruit fly)).